The sequence spans 112 residues: Putative pterin-4-alpha-carbinolamine dehydratase (112 aa).

Belongs to the pterin-4-alpha-carbinolamine dehydratase family.

It carries out the reaction (4aS,6R)-4a-hydroxy-L-erythro-5,6,7,8-tetrahydrobiopterin = (6R)-L-erythro-6,7-dihydrobiopterin + H2O. In Shewanella pealeana (strain ATCC 700345 / ANG-SQ1), this protein is Putative pterin-4-alpha-carbinolamine dehydratase.